A 294-amino-acid chain; its full sequence is Segregation and condensation protein A (294 aa).

Belongs to the ScpA family. As to quaternary structure, component of a cohesin-like complex composed of ScpA, ScpB and the Smc homodimer, in which ScpA and ScpB bind to the head domain of Smc. The presence of the three proteins is required for the association of the complex with DNA.

Its subcellular location is the cytoplasm. In terms of biological role, participates in chromosomal partition during cell division. May act via the formation of a condensin-like complex containing Smc and ScpB that pull DNA away from mid-cell into both cell halves. This Ureaplasma parvum serovar 3 (strain ATCC 700970) protein is Segregation and condensation protein A.